The chain runs to 511 residues: Lysine--tRNA ligase (511 aa).

Residues E422 and E429 each contribute to the Mg(2+) site.

It belongs to the class-II aminoacyl-tRNA synthetase family. Homodimer. Requires Mg(2+) as cofactor.

It is found in the cytoplasm. It catalyses the reaction tRNA(Lys) + L-lysine + ATP = L-lysyl-tRNA(Lys) + AMP + diphosphate. This chain is Lysine--tRNA ligase, found in Chlorobaculum tepidum (strain ATCC 49652 / DSM 12025 / NBRC 103806 / TLS) (Chlorobium tepidum).